We begin with the raw amino-acid sequence, 329 residues long: Beta-ketoacyl-[acyl-carrier-protein] synthase III (329 aa).

Catalysis depends on residues Cys-123 and His-256. Residues 257-261 are ACP-binding; that stretch reads QANIR. Residue Asn-286 is part of the active site.

The protein belongs to the thiolase-like superfamily. FabH family. In terms of assembly, homodimer.

The protein localises to the cytoplasm. It catalyses the reaction malonyl-[ACP] + acetyl-CoA + H(+) = 3-oxobutanoyl-[ACP] + CO2 + CoA. It participates in lipid metabolism; fatty acid biosynthesis. Its function is as follows. Catalyzes the condensation reaction of fatty acid synthesis by the addition to an acyl acceptor of two carbons from malonyl-ACP. Catalyzes the first condensation reaction which initiates fatty acid synthesis and may therefore play a role in governing the total rate of fatty acid production. Possesses both acetoacetyl-ACP synthase and acetyl transacylase activities. Its substrate specificity determines the biosynthesis of branched-chain and/or straight-chain of fatty acids. The polypeptide is Beta-ketoacyl-[acyl-carrier-protein] synthase III (Burkholderia lata (strain ATCC 17760 / DSM 23089 / LMG 22485 / NCIMB 9086 / R18194 / 383)).